The sequence spans 1300 residues: CRISPR-associated endonuclease Cas12a (1300 aa).

Residues 1 to 24 (MSIYQEFVNKYSLSKTLRFELIPQ) are wedge region 1. Recognition domain regions lie at residues 25 to 339 (GKTL…SFVI) and 340 to 591 (DKLE…QKPY). Binds crRNA alone and in crRNA-target DNA heteroduplex stretches follow at residues 47–51 (YKKAK) and 182–186 (FHENR). The binds DNA in crRNA-target DNA heteroduplex stretch occupies residues 301-305 (NEYIN). 2 binds crRNA in crRNA-target DNA heteroduplex regions span residues 326 to 329 (KQIL) and 538 to 541 (HKLK). The tract at residues 591-595 (YSDEK) is binds crRNA. The tract at residues 592-662 (SDEKFKLNFE…GYKKIVYKLL (71 aa)) is wedge region 2. Positions 662–679 (LPGANKMLPKVFFSAKSI) are LKL, important for PAM recognition and DNA unwinding. The tract at residues 663–762 (PGANKMLPKV…FYREVENQGY (100 aa)) is PAM-interacting domain (PI). Residues 671-677 (KVFFSAK) are binds DNA protospacer adjacent motif (PAM) on target DNA. The interval 692-704 (RNHSTHTKNGSPQ) is binds single-strand non-target DNA. A wedge region 3 region spans residues 763–892 (KLTFENISES…PITINFKSSG (130 aa)). Binds crRNA regions lie at residues 791 to 794 (KDFS) and 803 to 804 (LH). Catalysis depends on for pre-crRNA processing residues histidine 843, lysine 852, and lysine 869. 2 binds crRNA regions span residues 851 to 853 (NKN) and 865 to 873 (YDLIKDKRF). The interval 893 to 953 (ANKFNDEINL…IGNDRMKTNY (61 aa)) is ruvC-I. Residue aspartate 917 is the For DNase activity of RuvC domain of the active site. The bridge helix stretch occupies residues 954-971 (HDKLAAIEKDRDSARKDW). The ruvC-II stretch occupies residues 972–1078 (KKINNIKEMK…KQTGIIYYVP (107 aa)). Glutamate 1006 (for DNase activity of RuvC domain) is an active-site residue. A nuclease domain region spans residues 1079–1254 (AGFTSKICPV…QAPKNMPQDA (176 aa)). The active-site For DNase activity of RuvC domain is aspartate 1255. The ruvC-III stretch occupies residues 1255-1300 (DANGAYHIGLKGLMLLGRIKNNQEGKKLNLVIKNEEYFEFVQNRNN).

It belongs to the CRISPR-associated endonuclease Cas12a family. In terms of assembly, might be a homodimer. Might be a monomer. The cofactor is Ca(2+). Requires Mg(2+) as cofactor.

The enzyme catalyses Endonucleolytic cleavage to 5'-phosphodinucleotide and 5'-phosphooligonucleotide end-products.. It carries out the reaction RNA = a 5'-hydroxy-ribonucleotide + n nucleoside-2',3'-cyclophosphates.. CRISPR (clustered regularly interspaced short palindromic repeat), is an adaptive immune system that provides protection against mobile genetic elements (viruses, transposable elements and conjugative plasmids). CRISPR clusters contain sequences complementary to antecedent mobile elements and target invading nucleic acids. CRISPR clusters are transcribed and processed into CRISPR RNA (crRNA). Has endonuclease activity on pre-crRNA and dsDNA, using different active sites. A single-RNA guided endonuclease that is also capable of guiding crRNA processing; correct processing of pre-crRNA requires only this protein and the CRISPR locus. pre-crRNA processing proceeds by an intramolecular nucleophilic attack on the scissile phosphate by the 2'-OH of the upstream ribonucleotide, the divalent cation (which is bound by the crRNA) is probably required for ordering the crRNA pseudoknot and/or increasing RNA binding. RNA mutagenesis studies show pre-crRNA cleavage is highly sequence- and structure-specific. Forms a complex with crRNA and complementary dsDNA, where the crRNA displaces the non-target DNA strand and directs endonucleolytic cleavage of both strands of the DNA. Cleavage results in staggered 5-base 5' overhangs 14-18 and 21-23 bases downstream of the PAM (protospacer adjacent motif) on the non-target and target strands respectively. Both target and non-target strand DNA are probably independently cleaved in the same active site. When this protein is expressed in E.coli it prevents plasmids homologous to the first CRISPR spacer from transforming, formally showing it is responsible for plasmid immunity. This Francisella tularensis subsp. novicida (strain U112) protein is CRISPR-associated endonuclease Cas12a.